A 927-amino-acid polypeptide reads, in one-letter code: Cell division control protein 15 (927 aa).

One can recognise an F-BAR domain in the interval 20–273 (VKFRDNFWGS…TLENTNIDED (254 aa)). A coiled-coil region spans residues 108–207 (QQINTELRNK…AEYRETNELL (100 aa)). Over residues 321–354 (SRPSASASLASSPTRSAFRPKTSETVSSEVVSSP) the composition is skewed to low complexity. Disordered stretches follow at residues 321–370 (SRPS…SNEQ), 390–409 (ESQKPVLTGSSMRRPSVTSP), 423–495 (VRSS…TSLG), 509–550 (PTSP…DELE), and 597–857 (SSSM…VDPR). 2 positions are modified to phosphoserine: serine 331 and serine 332. The segment covering 397-409 (TGSSMRRPSVTSP) has biased composition (polar residues). Residues 444-461 (PEVKEGKNSENAITKDND) are compositionally biased toward basic and acidic residues. Polar residues-rich tracts occupy residues 465-482 (LSSQLQPTATGSRSSRLS), 513-546 (FMGSSFSNMGSRSTSPTKEGFASNQHATGASVQS), and 616-625 (LSKTSSSTRL). A Phosphothreonine modification is found at threonine 529. Serine 636 and serine 639 each carry phosphoserine. The segment covering 658–675 (TSAQMQRMSNSFASQTKQ) has biased composition (polar residues). The span at 680 to 691 (QRTENSARESLR) shows a compositional bias: basic and acidic residues. Positions 695–714 (SNMSRSPSPMLSRRSSTLRP) are enriched in low complexity. Serine 700 is modified (phosphoserine). Composition is skewed to polar residues over residues 718–730 (RSASSLSVRQSDV) and 739–775 (ARGQSVSGQQRPSSSMSLYGEYNKSQPQLSMQRSVSP). Residue serine 774 is modified to Phosphoserine. Positions 784-813 (SSSVLQSQKSTSSNTSNRNNGGYSGSRPSS) are enriched in low complexity. A compositionally biased stretch (polar residues) spans 823–853 (SGRSMRQVSQRSTSRARSPEPTNRNSVQSKN). Residues 866 to 927 (PILGYVIALY…LFPSNFVQTV (62 aa)) enclose the SH3 domain.

The protein resides in the cytoplasm. It is found in the cytoskeleton. After the onset of mitosis, forms a ring-like structure which colocalizes with the medial actin ring. Appears to mediate cytoskeletal rearrangements required for cytokinesis. Essential for viability. This is Cell division control protein 15 (cdc15) from Schizosaccharomyces pombe (strain 972 / ATCC 24843) (Fission yeast).